The following is a 189-amino-acid chain: UPF0398 protein lhv_1265 (189 aa).

This sequence belongs to the UPF0398 family.

This is UPF0398 protein lhv_1265 from Lactobacillus helveticus (strain DPC 4571).